The following is a 280-amino-acid chain: MLGQQQQQLYSSAALLTGERSRLLTCYVQDYLECVESLPHDMQRNVSVLRELDNKYQETLKEIDDVYEKYKKEDDLNQKKRLQQLLQRALINSQELGDEKIQIVTQMLELVENRARQMELHSQCFQDPAESERASDKAKMDSSQPERSSRRPRRQRTSESRDLCHMANGIEDCDDQPPKEKKSKSAKKKKRSKAKQEREASPVEFAIDPNEPTYCLCNQVSYGEMIGCDNEQCPIEWFHFSCVSLTYKPKGKWYCPKCRGDNEKTMDKSTEKTKKDRRSR.

The stretch at 48-120 (VLRELDNKYQ…VENRARQMEL (73 aa)) forms a coiled coil. The interval 122–204 (SQCFQDPAES…KQEREASPVE (83 aa)) is disordered. Positions 130–140 (ESERASDKAKM) are enriched in basic and acidic residues. Basic residues predominate over residues 181 to 193 (KKSKSAKKKKRSK). Lysine 195 participates in a covalent cross-link: Glycyl lysine isopeptide (Lys-Gly) (interchain with G-Cter in SUMO1). Residues 212–261 (PTYCLCNQVSYGEMIGCDNEQCPIEWFHFSCVSLTYKPKGKWYCPKCRGD) form a PHD-type zinc finger. 8 residues coordinate Zn(2+): cysteine 215, cysteine 217, cysteine 228, cysteine 233, histidine 239, cysteine 242, cysteine 255, and cysteine 258. The span at 258–274 (CRGDNEKTMDKSTEKTK) shows a compositional bias: basic and acidic residues. A disordered region spans residues 258–280 (CRGDNEKTMDKSTEKTKKDRRSR). The PBR stretch occupies residues 264-280 (KTMDKSTEKTKKDRRSR).

The protein belongs to the ING family. In terms of assembly, interacts with H3K4me3 and to a lesser extent with H3K4me2. Component of a mSin3A-like complex at least consisting of SIN3A, HDAC1, HDAC2, RBBP4/RbAp48, RBBP7/RbAp46, SAP30 and ING2. Post-translationally, sumoylation enhances its association with SIN3A and is required for binding to some target gene promoters, this is the case for TMEM71. As to expression, widely expressed. Higher expressed in colon-cancer tumor than in normal colon tissues.

Its subcellular location is the nucleus. Seems to be involved in p53/TP53 activation and p53/TP53-dependent apoptotic pathways, probably by enhancing acetylation of p53/TP53. Component of a mSin3A-like corepressor complex, which is probably involved in deacetylation of nucleosomal histones. ING2 activity seems to be modulated by binding to phosphoinositides (PtdInsPs). The chain is Inhibitor of growth protein 2 (ING2) from Homo sapiens (Human).